The following is an 83-amino-acid chain: Neurotoxin-1'' (83 aa).

A signal peptide spans 1 to 19 (MNYLVMISLALLLMIGVES). In terms of domain architecture, LCN-type CS-alpha/beta spans 21–82 (RDGYIVYPNN…PIKDTSRKCT (62 aa)). 4 disulfide bridges follow: Cys-31–Cys-81, Cys-35–Cys-53, Cys-39–Cys-63, and Cys-43–Cys-65. Residue Arg-83 is a propeptide, removed by a carboxypeptidase (in neurotoxin-1/1').

This sequence belongs to the long (4 C-C) scorpion toxin superfamily. Sodium channel inhibitor family. Alpha subfamily. Expressed by the venom gland.

It localises to the secreted. Functionally, alpha toxins bind voltage-independently at site-3 of sodium channels (Nav) and inhibit the inactivation of the activated channels, thereby blocking neuronal transmission. Is active against mammals and binds with high affinity rat brain synaptosomes. This Androctonus australis (Sahara scorpion) protein is Neurotoxin-1''.